The sequence spans 3371 residues: Protocadherin-23 (3371 aa).

The tract at residues 1 to 40 (MSPCGRKMGEGRQQRRAPVGKLLLLPGRRDTPHGRSGSSG) is disordered. At 1-46 (MSPCGRKMGEGRQQRRAPVGKLLLLPGRRDTPHGRSGSSGARTQRS) the chain is on the cytoplasmic side. A helical membrane pass occupies residues 47–67 (LLWLLVHVWLWAASGSSAQLF). 27 Cadherin domains span residues 65–167 (QLFN…SPRF), 168–296 (PLDS…PPVF), 297–413 (EQDE…RPAI), 424–539 (ARVS…PPLF), 540–663 (SQQH…EPIF), 664–771 (WRQV…HPVF), 772–881 (NPST…RPKY), 877–979 (ERPK…HPAF), 980–1082 (LRTS…SPSW), 1085–1191 (EHLV…SPTF), 1192–1294 (LHDV…RPFF), 1299–1415 (PGKE…IPEN), 1404–1510 (SQNI…SPSF), 1511–1620 (QDEL…NPTF), 1620–1724 (FISF…APVF), 1725–1829 (KQHL…APEF), 1830–1933 (IVSS…SPSF), 1934–2038 (PTLY…DPVL), 2039–2130 (EQNP…VIHM), 2140–2242 (SHHL…SPCF), 2243–2347 (EQSI…APAF), 2347–2447 (FLPS…PPVF), 2448–2549 (SQDF…APEF), 2550–2665 (TVKS…PPNF), 2666–2769 (SSLS…APQF), 2770–2880 (MFSS…EPIF), and 2881–2988 (TQDQ…TPLA). The Extracellular portion of the chain corresponds to 68–2986 (NLTLSVDEGL…NVSFSSEGTP (2919 aa)). N-linked (GlcNAc...) asparagine glycosylation is found at Asn-669, Asn-772, Asn-814, Asn-905, Asn-966, Asn-1038, Asn-1172, and Asn-1275. Asn-1487, Asn-1595, Asn-1617, and Asn-1664 each carry an N-linked (GlcNAc...) asparagine glycan. An N-linked (GlcNAc...) asparagine glycan is attached at Asn-1898. Asn-2054, Asn-2070, and Asn-2098 each carry an N-linked (GlcNAc...) asparagine glycan. Residue Asn-2329 is glycosylated (N-linked (GlcNAc...) asparagine). N-linked (GlcNAc...) asparagine glycans are attached at residues Asn-2479, Asn-2497, Asn-2555, and Asn-2664. Residues Asn-2929 and Asn-2977 are each glycosylated (N-linked (GlcNAc...) asparagine). A helical membrane pass occupies residues 2987–3017 (LAVFASSFSISLVVSFLVFLILICILIVMIL). The Cytoplasmic segment spans residues 3018–3371 (RHKQKDTINN…ELKAEDEVQI (354 aa)). Basic and acidic residues predominate over residues 3117–3140 (KCSDSALSDHESRVPDSGIPRDSD). Residues 3117-3141 (KCSDSALSDHESRVPDSGIPRDSDQ) are disordered.

In terms of tissue distribution, cerebral cortex and testis.

Its subcellular location is the membrane. Functionally, calcium-dependent cell-adhesion protein. The polypeptide is Protocadherin-23 (DCHS2) (Homo sapiens (Human)).